The sequence spans 214 residues: Urease accessory protein UreG (214 aa).

GTP is bound at residue 23–30 (GPVGSGKT).

The protein belongs to the SIMIBI class G3E GTPase family. UreG subfamily. As to quaternary structure, homodimer. UreD, UreF and UreG form a complex that acts as a GTP-hydrolysis-dependent molecular chaperone, activating the urease apoprotein by helping to assemble the nickel containing metallocenter of UreC. The UreE protein probably delivers the nickel.

It localises to the cytoplasm. In terms of biological role, facilitates the functional incorporation of the urease nickel metallocenter. This process requires GTP hydrolysis, probably effectuated by UreG. In Bordetella pertussis (strain Tohama I / ATCC BAA-589 / NCTC 13251), this protein is Urease accessory protein UreG.